The following is a 251-amino-acid chain: Probable aquaporin TIP4-1 (251 aa).

Transmembrane regions (helical) follow at residues L26–P46 and A57–F77. Positions N85–A87 match the NPA 1 motif. Transmembrane regions (helical) follow at residues A104–L124, G144–L164, and V170–G190. Positions N198–A200 match the NPA 2 motif. Residues W219–V239 traverse the membrane as a helical segment.

It belongs to the MIP/aquaporin (TC 1.A.8) family. TIP (TC 1.A.8.10) subfamily. As to expression, expressed in roots, leaves and anthers.

It is found in the vacuole membrane. In terms of biological role, aquaporins facilitate the transport of water and small neutral solutes across cell membranes. May be involved in transport from the vacuolar compartment to the cytoplasm. In Oryza sativa subsp. japonica (Rice), this protein is Probable aquaporin TIP4-1 (TIP4-1).